A 278-amino-acid polypeptide reads, in one-letter code: Small ribosomal subunit protein uS3 (278 aa).

The KH type-2 domain occupies 39–107 (LRKAIAKKYV…KVQLNIVEIS (69 aa)). A disordered region spans residues 244-278 (AKPKRVTKKAEAEASAEEKPKRAAKKAENITKEEE). The segment covering 251–278 (KKAEAEASAEEKPKRAAKKAENITKEEE) has biased composition (basic and acidic residues).

Belongs to the universal ribosomal protein uS3 family. As to quaternary structure, part of the 30S ribosomal subunit. Forms a tight complex with proteins S10 and S14.

Functionally, binds the lower part of the 30S subunit head. Binds mRNA in the 70S ribosome, positioning it for translation. The protein is Small ribosomal subunit protein uS3 of Dehalococcoides mccartyi (strain ATCC BAA-2266 / KCTC 15142 / 195) (Dehalococcoides ethenogenes (strain 195)).